Consider the following 381-residue polypeptide: Beta-lactamase CMY-4 (381 aa).

The N-terminal stretch at 1-20 (MMKKSLCCALLLTASFSTFA) is a signal peptide. Serine 84 functions as the Acyl-ester intermediate in the catalytic mechanism. A beta-lactam is bound by residues serine 84, glutamine 140, tyrosine 170, and asparagine 172.

This sequence belongs to the class-C beta-lactamase family.

It carries out the reaction a beta-lactam + H2O = a substituted beta-amino acid. Its function is as follows. Class C beta-lactamase which confers resistance to penicillins and cephalosporins. In Klebsiella pneumoniae, this protein is Beta-lactamase CMY-4.